A 385-amino-acid polypeptide reads, in one-letter code: Chaperone protein DnaJ (385 aa).

Residues 5 to 70 (DFYDVLGVSR…QSRAAYDQFG (66 aa)) form the J domain. The segment at 143-221 (GKKAQVRVPG…CHGAGRVEKE (79 aa)) adopts a CR-type zinc-finger fold. Cys-156, Cys-159, Cys-173, Cys-176, Cys-195, Cys-198, Cys-209, and Cys-212 together coordinate Zn(2+). CXXCXGXG motif repeat units follow at residues 156-163 (CEVCTGTG), 173-180 (CPTCQGHG), 195-202 (CPTCHGRG), and 209-216 (CTNCHGAG).

This sequence belongs to the DnaJ family. Homodimer. Zn(2+) is required as a cofactor.

The protein localises to the cytoplasm. Its function is as follows. Participates actively in the response to hyperosmotic and heat shock by preventing the aggregation of stress-denatured proteins and by disaggregating proteins, also in an autonomous, DnaK-independent fashion. Unfolded proteins bind initially to DnaJ; upon interaction with the DnaJ-bound protein, DnaK hydrolyzes its bound ATP, resulting in the formation of a stable complex. GrpE releases ADP from DnaK; ATP binding to DnaK triggers the release of the substrate protein, thus completing the reaction cycle. Several rounds of ATP-dependent interactions between DnaJ, DnaK and GrpE are required for fully efficient folding. Also involved, together with DnaK and GrpE, in the DNA replication of plasmids through activation of initiation proteins. In Parvibaculum lavamentivorans (strain DS-1 / DSM 13023 / NCIMB 13966), this protein is Chaperone protein DnaJ.